The primary structure comprises 231 residues: LexA repressor (231 aa).

The segment at residues 31-51 is a DNA-binding region (H-T-H motif); sequence RAEIATEFGFRSANAAEEHLQ. Active-site for autocatalytic cleavage activity residues include Ser-148 and Lys-185.

The protein belongs to the peptidase S24 family. In terms of assembly, homodimer.

The catalysed reaction is Hydrolysis of Ala-|-Gly bond in repressor LexA.. Represses a number of genes involved in the response to DNA damage (SOS response), including recA and lexA. In the presence of single-stranded DNA, RecA interacts with LexA causing an autocatalytic cleavage which disrupts the DNA-binding part of LexA, leading to derepression of the SOS regulon and eventually DNA repair. The polypeptide is LexA repressor (Leptothrix cholodnii (strain ATCC 51168 / LMG 8142 / SP-6) (Leptothrix discophora (strain SP-6))).